Here is a 196-residue protein sequence, read N- to C-terminus: DnaA initiator-associating protein DiaA (196 aa).

The region spanning 34–196 (LVQSLLNGNK…DNTLFPHQDD (163 aa)) is the SIS domain.

It belongs to the SIS family. DiaA subfamily. As to quaternary structure, homotetramer; dimer of dimers.

In terms of biological role, required for the timely initiation of chromosomal replication via direct interactions with the DnaA initiator protein. The sequence is that of DnaA initiator-associating protein DiaA from Shigella flexneri serotype 5b (strain 8401).